Consider the following 139-residue polypeptide: Ribonuclease VapC3 (139 aa).

In terms of domain architecture, PINc spans 14 to 121; that stretch reads EAIVLDTGAF…VATDDYTLQR (108 aa). Aspartate 19 is a Mg(2+) binding site.

It belongs to the PINc/VapC protein family. Mg(2+) is required as a cofactor.

In terms of biological role, toxic component of a type II toxin-antitoxin (TA) system. An RNase. In Aeropyrum pernix (strain ATCC 700893 / DSM 11879 / JCM 9820 / NBRC 100138 / K1), this protein is Ribonuclease VapC3.